Here is a 360-residue protein sequence, read N- to C-terminus: Phospho-N-acetylmuramoyl-pentapeptide-transferase (360 aa).

10 helical membrane passes run 18–38 (VFSYLTLRAILGILTALMMSL), 73–93 (TMGGLLILAAIFTSTLLWADL), 97–117 (YVWATLFVIGSLGVVGFVDDY), 135–155 (FWQSVIALVVACALFFTSTQA), 168–188 (VLPQLGLFYIVITYFALVGTS), 199–219 (GLAIVPTILVAAALAIIAYLT), 236–256 (ASELVVVCTAIVGAGLGFLWF), 263–283 (VFMGDVGSLALGGALGIIAVL), 288–308 (LLLIIMGGVFVMEALSVILQV), and 339–359 (IVRFWIISIVLVLAGLATLKI).

It belongs to the glycosyltransferase 4 family. MraY subfamily. Requires Mg(2+) as cofactor.

It localises to the cell inner membrane. The catalysed reaction is UDP-N-acetyl-alpha-D-muramoyl-L-alanyl-gamma-D-glutamyl-meso-2,6-diaminopimeloyl-D-alanyl-D-alanine + di-trans,octa-cis-undecaprenyl phosphate = di-trans,octa-cis-undecaprenyl diphospho-N-acetyl-alpha-D-muramoyl-L-alanyl-D-glutamyl-meso-2,6-diaminopimeloyl-D-alanyl-D-alanine + UMP. Its pathway is cell wall biogenesis; peptidoglycan biosynthesis. Its function is as follows. Catalyzes the initial step of the lipid cycle reactions in the biosynthesis of the cell wall peptidoglycan: transfers peptidoglycan precursor phospho-MurNAc-pentapeptide from UDP-MurNAc-pentapeptide onto the lipid carrier undecaprenyl phosphate, yielding undecaprenyl-pyrophosphoryl-MurNAc-pentapeptide, known as lipid I. This is Phospho-N-acetylmuramoyl-pentapeptide-transferase from Pseudoalteromonas translucida (strain TAC 125).